Here is a 178-residue protein sequence, read N- to C-terminus: Large ribosomal subunit protein bL35m (178 aa).

Belongs to the bacterial ribosomal protein bL35 family.

It localises to the mitochondrion. In Drosophila melanogaster (Fruit fly), this protein is Large ribosomal subunit protein bL35m (mRpL35).